The following is a 605-amino-acid chain: Probable potassium transport system protein Kup (605 aa).

12 helical membrane-spanning segments follow: residues 18 to 38, 46 to 66, 97 to 117, 138 to 158, 169 to 189, 204 to 224, 247 to 267, 287 to 307, 339 to 359, 368 to 388, 395 to 415, and 418 to 438; these read GLVF…IIAL, ILGI…LEYA, MAFV…DGVI, GLSQ…LFVF, AFGP…AISV, AISF…EVIL, AWYF…AFII, FYIP…QALI, IYIG…MLVF, AYGF…TMIF, WKVP…VSNC, and LPHG…VILI.

Belongs to the HAK/KUP transporter (TC 2.A.72) family.

Its subcellular location is the cell inner membrane. It carries out the reaction K(+)(in) + H(+)(in) = K(+)(out) + H(+)(out). Transport of potassium into the cell. Likely operates as a K(+):H(+) symporter. In Pelobacter propionicus (strain DSM 2379 / NBRC 103807 / OttBd1), this protein is Probable potassium transport system protein Kup.